The following is a 528-amino-acid chain: J domain-containing protein APJ1 (528 aa).

A J domain is found at 4–73 (NTSLYDSLNV…RALYDQYGTT (70 aa)). The CR-type zinc finger occupies 193–274 (GKTAKLGLNR…CQGLGFIKER (82 aa)). 4 CXXCXGXG motif repeats span residues 206–213 (CSVCDGHG), 218–225 (CTCKTCKG), 246–253 (CADCGGAG), and 262–269 (CQQCQGLG). A compositionally biased stretch (basic and acidic residues) spans 485 to 499 (NERDSRKRNNRRFDE). Positions 485 to 528 (NERDSRKRNNRRFDESNINNNNETKRNKYSSPVSGFYDHDINGY) are disordered.

It is found in the cytoplasm. The protein localises to the nucleus. Putative chaperone involved in protein folding. Interferes with propagation of [PSI+] prion when overproduced. The chain is J domain-containing protein APJ1 (APJ1) from Saccharomyces cerevisiae (strain ATCC 204508 / S288c) (Baker's yeast).